Reading from the N-terminus, the 246-residue chain is tRNA (guanine-N(1)-)-methyltransferase (246 aa).

S-adenosyl-L-methionine-binding positions include Gly-114 and 134–139 (IGDYIL).

It belongs to the RNA methyltransferase TrmD family. In terms of assembly, homodimer.

The protein localises to the cytoplasm. The catalysed reaction is guanosine(37) in tRNA + S-adenosyl-L-methionine = N(1)-methylguanosine(37) in tRNA + S-adenosyl-L-homocysteine + H(+). Its function is as follows. Specifically methylates guanosine-37 in various tRNAs. The protein is tRNA (guanine-N(1)-)-methyltransferase of Coxiella burnetii (strain CbuG_Q212) (Coxiella burnetii (strain Q212)).